Reading from the N-terminus, the 322-residue chain is Cytochrome c biogenesis protein CcsA (322 aa).

A run of 7 helical transmembrane segments spans residues 9–29 (ILTH…LITL), 43–63 (GMIA…IYSG), 70–90 (LYES…VPKI), 142–162 (MLLS…LLVI), 226–246 (VISL…VWAN), 259–274 (ETWA…IYSH), and 287–307 (AIVA…VNLL).

It belongs to the CcmF/CycK/Ccl1/NrfE/CcsA family. In terms of assembly, may interact with Ccs1.

It localises to the plastid. The protein resides in the chloroplast thylakoid membrane. Required during biogenesis of c-type cytochromes (cytochrome c6 and cytochrome f) at the step of heme attachment. This is Cytochrome c biogenesis protein CcsA from Chloranthus spicatus (Chulantree).